Reading from the N-terminus, the 214-residue chain is Adenylate kinase (214 aa).

Residue 10-15 (GAGKGT) coordinates ATP. The interval 30-59 (STGDMLRAAVKAGTPLGLEAKKVMDAGQLV) is NMP. AMP-binding positions include T31, R36, 57–59 (QLV), 85–88 (GFPR), and Q92. Positions 122–159 (GRRVHSGSGRVYHVVFNPPKVEGKDDVTGEDLSIRPDD) are LID. ATP is bound by residues R123 and 132-133 (VY). Positions 156 and 167 each coordinate AMP. Q200 contributes to the ATP binding site.

Belongs to the adenylate kinase family. In terms of assembly, monomer.

The protein resides in the cytoplasm. It catalyses the reaction AMP + ATP = 2 ADP. It functions in the pathway purine metabolism; AMP biosynthesis via salvage pathway; AMP from ADP: step 1/1. In terms of biological role, catalyzes the reversible transfer of the terminal phosphate group between ATP and AMP. Plays an important role in cellular energy homeostasis and in adenine nucleotide metabolism. This is Adenylate kinase from Shewanella frigidimarina (strain NCIMB 400).